The following is a 165-amino-acid chain: ATP synthase subunit b (165 aa).

A helical membrane pass occupies residues 5–27 (INSTTLGNIIITLGSVFLLYYLI).

Belongs to the ATPase B chain family. F-type ATPases have 2 components, F(1) - the catalytic core - and F(0) - the membrane proton channel. F(1) has five subunits: alpha(3), beta(3), gamma(1), delta(1), epsilon(1). F(0) has three main subunits: a(1), b(2) and c(10-14). The alpha and beta chains form an alternating ring which encloses part of the gamma chain. F(1) is attached to F(0) by a central stalk formed by the gamma and epsilon chains, while a peripheral stalk is formed by the delta and b chains.

The protein localises to the cell membrane. Its function is as follows. F(1)F(0) ATP synthase produces ATP from ADP in the presence of a proton or sodium gradient. F-type ATPases consist of two structural domains, F(1) containing the extramembraneous catalytic core and F(0) containing the membrane proton channel, linked together by a central stalk and a peripheral stalk. During catalysis, ATP synthesis in the catalytic domain of F(1) is coupled via a rotary mechanism of the central stalk subunits to proton translocation. In terms of biological role, component of the F(0) channel, it forms part of the peripheral stalk, linking F(1) to F(0). The sequence is that of ATP synthase subunit b from Streptococcus thermophilus (strain CNRZ 1066).